A 307-amino-acid chain; its full sequence is 4-hydroxy-tetrahydrodipicolinate synthase (307 aa).

Thr57 lines the pyruvate pocket. The Proton donor/acceptor role is filled by Tyr145. Catalysis depends on Lys173, which acts as the Schiff-base intermediate with substrate. Position 215 (Val215) interacts with pyruvate.

This sequence belongs to the DapA family. Homotetramer; dimer of dimers.

The protein localises to the cytoplasm. The enzyme catalyses L-aspartate 4-semialdehyde + pyruvate = (2S,4S)-4-hydroxy-2,3,4,5-tetrahydrodipicolinate + H2O + H(+). It functions in the pathway amino-acid biosynthesis; L-lysine biosynthesis via DAP pathway; (S)-tetrahydrodipicolinate from L-aspartate: step 3/4. In terms of biological role, catalyzes the condensation of (S)-aspartate-beta-semialdehyde [(S)-ASA] and pyruvate to 4-hydroxy-tetrahydrodipicolinate (HTPA). The chain is 4-hydroxy-tetrahydrodipicolinate synthase from Leptospira interrogans serogroup Icterohaemorrhagiae serovar copenhageni (strain Fiocruz L1-130).